Consider the following 54-residue polypeptide: Large ribosomal subunit protein bL33 (54 aa).

It belongs to the bacterial ribosomal protein bL33 family.

The sequence is that of Large ribosomal subunit protein bL33 from Chloroflexus aggregans (strain MD-66 / DSM 9485).